Here is a 380-residue protein sequence, read N- to C-terminus: cAMP-dependent protein kinase type I-alpha regulatory subunit (380 aa).

N-acetylmethionine is present on methionine 1. Alanine 2 carries the N-acetylalanine; in cAMP-dependent protein kinase type I-alpha regulatory subunit, N-terminally processed modification. The tract at residues 2 to 135 (ASGTTASEEE…ALAKAIEKNV (134 aa)) is dimerization and phosphorylation. 3 positions are modified to phosphoserine: serine 3, serine 76, and serine 82. Positions 64 to 96 (IQNLQKAGSRADSREDEISPPPPNPVVKGRRRR) are disordered. The short motif at 95–99 (RRGAI) is the Pseudophosphorylation motif element. Serine 100 bears the Phosphoserine mark. 3',5'-cyclic AMP contacts are provided by residues 136 to 253 (LFSH…SKVS), glutamate 201, arginine 210, 254 to 380 (ILES…SLSV), glutamate 325, and arginine 334. Residue serine 257 is modified to Phosphoserine.

It belongs to the cAMP-dependent kinase regulatory chain family. In terms of assembly, the inactive holoenzyme is composed of two regulatory chains and two catalytic chains. Activation by cAMP releases the two active catalytic monomers and the regulatory dimer. Interacts with PRKACA and PRKACB. PRKAR1A also interacts with RFC2; the complex may be involved in cell survival. Interacts with AKAP4. Interacts with RARA; the interaction occurs in the presence of cAMP or FSH and regulates RARA transcriptional activity. Interacts with the phosphorylated form of PJA2. Interacts with CBFA2T3. Interacts with PRKX; regulates this cAMP-dependent protein kinase. Interacts with smAKAP; this interaction may target PRKAR1A to the plasma membrane. Interacts with AICDA. Post-translationally, the pseudophosphorylation site binds to the substrate-binding region of the catalytic chain, resulting in the inhibition of its activity. The physiological significance of the in vitro phosphorylation of a proximal serine is unclear. In terms of tissue distribution, four types of regulatory chains are found: I-alpha, I-beta, II-alpha, and II-beta. Their expression varies among tissues and is in some cases constitutive and in others inducible.

The protein localises to the cell membrane. Regulatory subunit of the cAMP-dependent protein kinases involved in cAMP signaling in cells. The sequence is that of cAMP-dependent protein kinase type I-alpha regulatory subunit (PRKAR1A) from Bos taurus (Bovine).